A 355-amino-acid polypeptide reads, in one-letter code: Peptide chain release factor 1 (355 aa).

Gln-233 is subject to N5-methylglutamine. A compositionally biased stretch (basic and acidic residues) spans 281-293 (RRNKEQERADSRR). The disordered stretch occupies residues 281-308 (RRNKEQERADSRRGQIGSGDRSERIRTY).

The protein belongs to the prokaryotic/mitochondrial release factor family. In terms of processing, methylated by PrmC. Methylation increases the termination efficiency of RF1.

The protein localises to the cytoplasm. Functionally, peptide chain release factor 1 directs the termination of translation in response to the peptide chain termination codons UAG and UAA. The sequence is that of Peptide chain release factor 1 from Rickettsia akari (strain Hartford).